The chain runs to 1347 residues: DExH-box ATP-dependent RNA helicase DExH11 (1347 aa).

The segment at 263–291 (ELEGDDHTAGSESPKAEAEPDAKASISNE) is disordered. The span at 267-284 (DDHTAGSESPKAEAEPDA) shows a compositional bias: basic and acidic residues. In terms of domain architecture, Helicase ATP-binding spans 369–524 (ICCLEKGESV…WIGRTKQKEI (156 aa)). 382–389 (AHTSAGKT) serves as a coordination point for ATP. Residues 472–475 (DEVH) carry the DEVH box motif. Positions 566–625 (SQKKKNSNAVSVAPKQQMGSSAHQDGSKSQKHEAHSRGKQNKHSSVKDVGKSSYSGNSQN) are disordered. Residues 590–601 (DGSKSQKHEAHS) show a composition bias toward basic and acidic residues. In terms of domain architecture, Helicase C-terminal spans 673 to 838 (DLTSSSEKSE…LTYIMILHLL (166 aa)).

The protein belongs to the DExH box helicase family. SKI2 subfamily. Component of the cytoplasmic SKI complex, which consists of SKI2, SKI3 and VIP3/SKI8. As to expression, expressed in vascular tissues of leaves and roots of young plants.

It localises to the cytoplasm. It catalyses the reaction ATP + H2O = ADP + phosphate + H(+). Its function is as follows. Component of the SKI complex which is thought to be involved in exosome-mediated RNA decay and associates with transcriptionally active genes in a manner dependent on PAF1 complex (PAF1C). Involved in the regulation of potassium deprivation stress response. The polypeptide is DExH-box ATP-dependent RNA helicase DExH11 (Arabidopsis thaliana (Mouse-ear cress)).